A 147-amino-acid chain; its full sequence is HTH-type transcriptional regulator MgrA (147 aa).

Positions Lys-8–His-139 constitute an HTH marR-type domain. The H-T-H motif DNA-binding region spans Val-55–Gln-78.

It is found in the cytoplasm. In terms of biological role, regulatory protein involved in autolytic activity, multidrug resistance and virulence. Controls autolysis by inactivating LytM, LytN (autolysins) and SarV (autolysis activator) and activating ArlRS, LrgAB and LytSR (autolysis inhibitors). Acts as a dual regulator for resistance to multiple drugs by inactivating NorB and tet38 and activating NorA. Positively controls the expression of virulence accessory gene regulator (agr) to promote alpha-hemolysin (hla) transcription and down-regulates staphylococcal accessory regulator (sarS), leading to repression of surface protein A (spa). Binds directly to hla promoter to augment its activation. Binds to sarS promoter to down-regulate spa expression. This chain is HTH-type transcriptional regulator MgrA (mgrA), found in Staphylococcus aureus (strain NCTC 8325 / PS 47).